A 156-amino-acid polypeptide reads, in one-letter code: Low-salt glycan biosynthesis protein Agl8 (156 aa).

Substrate-binding positions include arginine 14–isoleucine 15 and arginine 47. Residues alanine 25–aspartate 156 form the Nudix hydrolase domain. Mg(2+) contacts are provided by glycine 60, glutamate 80, and glutamine 130. The short motif at glycine 61–glycine 82 is the Nudix box element.

Belongs to the Nudix hydrolase family. Mg(2+) serves as cofactor.

Its pathway is protein modification; protein glycosylation. It functions in the pathway cell surface structure biogenesis; S-layer biogenesis. Its function is as follows. Nudix hydrolase involved in N-glycan biosynthetic pathway that takes place under low-salt conditions (1.75 M instead of 3.4 M). Participates in the formation of the tetrasaccharide present at 'Asn-532' of S-layer glycoprotein Csg, consisting of a sulfated hexose, 2 hexoses and rhamnose. Mediates attachment of sugar 3 in the tetrasaccharide. The chain is Low-salt glycan biosynthesis protein Agl8 (agl8) from Haloferax volcanii (strain ATCC 29605 / DSM 3757 / JCM 8879 / NBRC 14742 / NCIMB 2012 / VKM B-1768 / DS2) (Halobacterium volcanii).